The chain runs to 294 residues: NAD kinase (294 aa).

Catalysis depends on D74, which acts as the Proton acceptor. NAD(+) contacts are provided by residues 74-75, 148-149, H159, R176, D178, 189-194, and Q249; these read DG, NE, and TAYSLS.

Belongs to the NAD kinase family. Requires a divalent metal cation as cofactor.

The protein localises to the cytoplasm. The catalysed reaction is NAD(+) + ATP = ADP + NADP(+) + H(+). Involved in the regulation of the intracellular balance of NAD and NADP, and is a key enzyme in the biosynthesis of NADP. Catalyzes specifically the phosphorylation on 2'-hydroxyl of the adenosine moiety of NAD to yield NADP. This Vibrio campbellii (strain ATCC BAA-1116) protein is NAD kinase.